A 613-amino-acid chain; its full sequence is Leucine aminopeptidase 2 (613 aa).

Residues 134–136 (QAQ) and 265–270 (PYGGME) contribute to the a peptide site. H294 is a binding site for Zn(2+). Residue E295 is the Proton acceptor of the active site. Residues H298 and E317 each contribute to the Zn(2+) site. Residue Y382 is the Proton donor of the active site.

The protein belongs to the peptidase M1 family. Zn(2+) is required as a cofactor.

It is found in the cytoplasm. The protein resides in the nucleus. It catalyses the reaction an epoxide + H2O = an ethanediol. Its function is as follows. Aminopeptidase that preferentially cleaves di- and tripeptides. Also has low epoxide hydrolase activity (in vitro). Can hydrolyze the epoxide leukotriene LTA(4) but it forms preferentially 5,6-dihydroxy-7,9,11,14-eicosatetraenoic acid rather than the cytokine leukotriene B(4) as the product compared to the homologous mammalian enzyme (in vitro). The sequence is that of Leucine aminopeptidase 2 from Pyricularia oryzae (strain 70-15 / ATCC MYA-4617 / FGSC 8958) (Rice blast fungus).